The sequence spans 710 residues: MLGKGIKKSWGWLGLTVLLLGSPCGWAAEFSASFKGTDIQEFINTVSKNLNKTVIIDPTVRGTISVRSYDMMNEGQYYQFFLSVLDVYGFSVVPMDNGVLKVIRSKDAKSSSIPLANNEQPGIGDELVTRVVPLNNVAARDLAPLLRQLNDNAGAGTVVHYEPSNVLLMTGRAAVIKRLVDIVNTVDKTGDREMVTVPLTYASAEDVAKLVNDLNKSDEKNALPSTMLANVVADGRTNSVVVSGEENARQRAVEMIRQLDRKQVVQGGTKVIYLKYAKALDLIEVLAGNGTSGNRNSSSSNASRPSSPRSGSSSNSNSSSGSSGSSSGSSSSSSSSSSMGFGSAFGSTSSSGGRTITIQGKEVTVRAHDQTNSLIITAPPDIMRDLEQVINQLDIRRPQVLVEAIIAEIQDADGLNLGIQWANKRAGMTQFTNTGIPISTAVIGTDQFRSNGTLTTAYASALSSFNGVTAGFYRGNWSMLLTALSSDSKNDVLATPSIVTLDNMEATFNVGQEVPVLTGSQTTSADNIFNTVERKTVGIKLRVKPQINEGDSVLLQIEQEVSSVADSNSSTNSSLGVTFNTRTVNNAVMVTNGETVVVGGLLDKTSVESNDKVPLLGDIPWLGSLFRSKSQEVRKRNLMLFLRPTIIRDPGQFQEASINKYRSFNNEQQQQRGEGNGVLDNNTLRLSGGNTYTFRQVQSSISDFYKPEGR.

An N-terminal signal peptide occupies residues 1 to 27 (MLGKGIKKSWGWLGLTVLLLGSPCGWA). An N0 region spans residues 28–105 (AEFSASFKGT…DNGVLKVIRS (78 aa)). The segment at 123–190 (IGDELVTRVV…DIVNTVDKTG (68 aa)) is N1. Positions 192–262 (REMVTVPLTY…VEMIRQLDRK (71 aa)) are N2. The interval 288-399 (GNGTSGNRNS…INQLDIRRPQ (112 aa)) is N3. Residues 289–353 (NGTSGNRNSS…AFGSTSSSGG (65 aa)) form a disordered region. The tract at residues 401-648 (LVEAIIAEIQ…MLFLRPTIIR (248 aa)) is secretin. The tract at residues 691–710 (TYTFRQVQSSISDFYKPEGR) is s domain.

It belongs to the bacterial secretin family. GSP D subfamily. In terms of assembly, forms a cylindrical channel with 15 subunits. Interacts with pilotin OutS.

Its subcellular location is the cell outer membrane. In terms of biological role, involved in a type II secretion system (T2SS, formerly general secretion pathway, GSP) for the export of proteins. Required for the translocation of the multiple pectic enzymes. This subunit forms the outer membrane channel. This is Secretin OutD (outD) from Dickeya dadantii (strain 3937) (Erwinia chrysanthemi (strain 3937)).